The chain runs to 262 residues: Glycerol uptake facilitator protein (262 aa).

Over 1 to 7 (MNFCSKK) the chain is Cytoplasmic. A helical membrane pass occupies residues 8–36 (KILKQCFFEFLGTGLIIFLGISSLVVSKL). Residues 37 to 41 (TNFHF) lie on the Extracellular side of the membrane. A helical membrane pass occupies residues 42-62 (NHCEISCIWGLGVFISICFCS). The Cytoplasmic segment spans residues 63–65 (SVS). Residues 66 to 69 (GAHL) lie within the membrane without spanning it. An NPA 1 motif is present at residues 70-72 (NPA). Residues 70 to 80 (NPAITIFLFLS) constitute an intramembrane region (helical). The Cytoplasmic portion of the chain corresponds to 81–86 (SQFNKK). Residues 87 to 110 (KVIPYILSQISGTFFFTFLIYLIF) form a helical membrane-spanning segment. The Extracellular portion of the chain corresponds to 111–145 (NNLLNSFESKYNIVRGTKKSLELASLFCVFPKENY). A helical transmembrane segment spans residues 146–171 (NFIHDFILEILIGIIFIIILMKLSEK). Over 172-180 (NNLFKFYKF) the chain is Cytoplasmic. Residues 181–197 (INPFLIGTLVIIINLFL) traverse the membrane as a helical segment. Residues 198-201 (TSYS) are Extracellular-facing. Residues 202-205 (NITL) lie within the membrane without spanning it. The NPA 2 signature appears at 206-208 (NPA). Residues 206–219 (NPARDLGPRIFLSL) constitute an intramembrane region (helical). Residues 220-234 (IGWGKLAFTGDDNII) are Extracellular-facing. Residues 235 to 259 (FPYFLIPTIAPIIGINLGGWIYILY) traverse the membrane as a helical segment. Over 260–262 (IKK) the chain is Cytoplasmic.

It belongs to the MIP/aquaporin (TC 1.A.8) family.

It is found in the cell membrane. The catalysed reaction is glycerol(in) = glycerol(out). In terms of biological role, mediates glycerol diffusion across the cytoplasmic membrane via a pore-type mechanism. The polypeptide is Glycerol uptake facilitator protein (glpF) (Buchnera aphidicola subsp. Schizaphis graminum (strain Sg)).